The chain runs to 296 residues: Phosphatidylglycerol--prolipoprotein diacylglyceryl transferase (296 aa).

Transmembrane regions (helical) follow at residues 17-37 (LAVRWYGLMYLVGFILAIVVG), 59-79 (MMFYGVLGVVLGGRLGYVLFY), and 97-117 (GGMSFHGGFLGVTLAMALFAW). Arginine 142 provides a ligand contact to a 1,2-diacyl-sn-glycero-3-phospho-(1'-sn-glycerol). A run of 2 helical transmembrane segments spans residues 230–250 (MGAISALFLIGYGAARFTVEF) and 265–285 (LSMGQWLSLPMIVAGVLMMIW).

The protein belongs to the Lgt family.

Its subcellular location is the cell inner membrane. The catalysed reaction is L-cysteinyl-[prolipoprotein] + a 1,2-diacyl-sn-glycero-3-phospho-(1'-sn-glycerol) = an S-1,2-diacyl-sn-glyceryl-L-cysteinyl-[prolipoprotein] + sn-glycerol 1-phosphate + H(+). Its pathway is protein modification; lipoprotein biosynthesis (diacylglyceryl transfer). Catalyzes the transfer of the diacylglyceryl group from phosphatidylglycerol to the sulfhydryl group of the N-terminal cysteine of a prolipoprotein, the first step in the formation of mature lipoproteins. The sequence is that of Phosphatidylglycerol--prolipoprotein diacylglyceryl transferase from Burkholderia thailandensis (strain ATCC 700388 / DSM 13276 / CCUG 48851 / CIP 106301 / E264).